Consider the following 404-residue polypeptide: Cysteine desulfurase IscS (404 aa).

Residues Ala75–Thr76, Asn155, Gln183, and Ser203–His205 contribute to the pyridoxal 5'-phosphate site. Lys206 carries the N6-(pyridoxal phosphate)lysine modification. Thr243 serves as a coordination point for pyridoxal 5'-phosphate. Residue Cys328 is the Cysteine persulfide intermediate of the active site. [2Fe-2S] cluster is bound at residue Cys328.

The protein belongs to the class-V pyridoxal-phosphate-dependent aminotransferase family. NifS/IscS subfamily. Homodimer. Forms a heterotetramer with IscU, interacts with other sulfur acceptors. Requires pyridoxal 5'-phosphate as cofactor.

It is found in the cytoplasm. It catalyses the reaction (sulfur carrier)-H + L-cysteine = (sulfur carrier)-SH + L-alanine. It functions in the pathway cofactor biosynthesis; iron-sulfur cluster biosynthesis. In terms of biological role, master enzyme that delivers sulfur to a number of partners involved in Fe-S cluster assembly, tRNA modification or cofactor biosynthesis. Catalyzes the removal of elemental sulfur atoms from cysteine to produce alanine. Functions as a sulfur delivery protein for Fe-S cluster synthesis onto IscU, an Fe-S scaffold assembly protein, as well as other S acceptor proteins. The protein is Cysteine desulfurase IscS of Stutzerimonas stutzeri (strain A1501) (Pseudomonas stutzeri).